A 96-amino-acid polypeptide reads, in one-letter code: Small ribosomal subunit protein bS6 (96 aa).

Belongs to the bacterial ribosomal protein bS6 family.

Functionally, binds together with bS18 to 16S ribosomal RNA. The polypeptide is Small ribosomal subunit protein bS6 (Streptococcus uberis (strain ATCC BAA-854 / 0140J)).